Here is a 473-residue protein sequence, read N- to C-terminus: Glutamate--tRNA ligase 2 (473 aa).

Residues 11–21 (PSPTGYLHIGG) carry the 'HIGH' region motif. Basic and acidic residues predominate over residues 113 to 133 (KARAEGRPPRYDGRWRDRDPS). Residues 113–136 (KARAEGRPPRYDGRWRDRDPSEAP) are disordered. A 'KMSKS' region motif is present at residues 240–244 (KLSKR). Lys243 contacts ATP.

Belongs to the class-I aminoacyl-tRNA synthetase family. Glutamate--tRNA ligase type 1 subfamily. Monomer.

It localises to the cytoplasm. It catalyses the reaction tRNA(Glu) + L-glutamate + ATP = L-glutamyl-tRNA(Glu) + AMP + diphosphate. Its function is as follows. Catalyzes the attachment of glutamate to tRNA(Glu) in a two-step reaction: glutamate is first activated by ATP to form Glu-AMP and then transferred to the acceptor end of tRNA(Glu). This Brucella abortus (strain S19) protein is Glutamate--tRNA ligase 2.